A 235-amino-acid polypeptide reads, in one-letter code: Matrix protein (235 aa).

Belongs to the nucleorhabdovirus type-2 matrix protein family. Homomultimer. Interacts with nucleoprotein and with the cytoplasmic domain of glycoprotein.

The protein localises to the virion membrane. Its subcellular location is the host endomembrane system. Its function is as follows. Plays a major role in assembly and budding of virion. Completely covers the ribonucleoprotein coil and keep it in condensed bullet-shaped form. Inhibits viral transcription and stimulates replication. The chain is Matrix protein (M) from Rottboellia (Sorghum).